A 415-amino-acid polypeptide reads, in one-letter code: G2/mitotic-specific cyclin cig1 (415 aa).

2 disordered regions span residues 54 to 74 (PTLI…DTFE) and 86 to 118 (EERS…ILTH). Low complexity predominate over residues 57–71 (IEGNNESSISSSTGD). Residue Ser96 is modified to Phosphoserine.

Belongs to the cyclin family. Cyclin G subfamily.

In terms of biological role, required for efficient passage of the G1/S transition. In Schizosaccharomyces pombe (strain 972 / ATCC 24843) (Fission yeast), this protein is G2/mitotic-specific cyclin cig1 (cig1).